The following is a 376-amino-acid chain: Deoxyguanosinetriphosphate triphosphohydrolase-like protein (376 aa).

Positions 62–198 (RLTHSLEVSA…AALADDISYI (137 aa)) constitute an HD domain.

It belongs to the dGTPase family. Type 2 subfamily.

This is Deoxyguanosinetriphosphate triphosphohydrolase-like protein from Rickettsia canadensis (strain McKiel).